The primary structure comprises 138 residues: NADH dehydrogenase [ubiquinone] 1 alpha subcomplex subunit N7BM (138 aa).

Belongs to the complex I NDUFA12 subunit family. As to quaternary structure, complex I is composed of 42 different subunits.

The protein localises to the mitochondrion inner membrane. Accessory subunit of the mitochondrial membrane respiratory chain NADH dehydrogenase (Complex I), that is believed not to be involved in catalysis. Complex I functions in the transfer of electrons from NADH to the respiratory chain. The immediate electron acceptor for the enzyme is believed to be ubiquinone. The polypeptide is NADH dehydrogenase [ubiquinone] 1 alpha subcomplex subunit N7BM (Yarrowia lipolytica (strain CLIB 122 / E 150) (Yeast)).